Reading from the N-terminus, the 548-residue chain is Viridiflorene synthase (548 aa).

Mg(2+) is bound by residues Asp-301, Asp-305, Asp-444, Thr-448, and Glu-452. The DDXXD motif signature appears at 301–305; sequence DDTFD.

Belongs to the terpene synthase family. Tpsa subfamily. Mg(2+) serves as cofactor. In terms of tissue distribution, expressed in stem and leaf trichomes. Detected in roots, fruits and flowers.

Its subcellular location is the cytoplasm. It carries out the reaction (2E,6E)-farnesyl diphosphate = viridiflorene + diphosphate. It participates in secondary metabolite biosynthesis; terpenoid biosynthesis. Functionally, sesquiterpene synthase involved in the production of viridiflorene from (E,E)-farnesyl diphosphate. Can also use (Z,Z)-FPP to make several unidentified sesquiterpenes. The chain is Viridiflorene synthase from Solanum lycopersicum (Tomato).